The following is a 271-amino-acid chain: PH domain-containing protein ECU06_0670 (271 aa).

Residues 26 to 145 (AKKTLDSSES…EKKNDAFIPP (120 aa)) form a disordered region. Composition is skewed to basic and acidic residues over residues 42 to 64 (EVGE…EPAM), 92 to 120 (QPEK…LLDK), and 128 to 140 (EENA…KKND). The PH domain occupies 166-267 (NTVVEGWMWK…WVEKLNETIR (102 aa)).

This Encephalitozoon cuniculi (strain GB-M1) (Microsporidian parasite) protein is PH domain-containing protein ECU06_0670.